Consider the following 557-residue polypeptide: Probable protein kinase UbiB (557 aa).

One can recognise a Protein kinase domain in the interval 121-509 (SFDTVPLASA…RKLQTRVVTA (389 aa)). Residues 127 to 135 (LASASIAQV) and Lys-154 contribute to the ATP site. The Proton acceptor role is filled by Asp-289. 2 consecutive transmembrane segments (helical) span residues 506–526 (VVTAITGSGLLVVAAVLYGLH) and 535–555 (VPVWSWISGGAGSAALLVAWL).

This sequence belongs to the ABC1 family. UbiB subfamily.

The protein resides in the cell inner membrane. It functions in the pathway cofactor biosynthesis; ubiquinone biosynthesis [regulation]. In terms of biological role, is probably a protein kinase regulator of UbiI activity which is involved in aerobic coenzyme Q (ubiquinone) biosynthesis. This chain is Probable protein kinase UbiB, found in Xanthomonas euvesicatoria pv. vesicatoria (strain 85-10) (Xanthomonas campestris pv. vesicatoria).